The following is a 188-amino-acid chain: Capsid protein (188 aa).

The protein belongs to the tymoviruses capsid protein family.

The protein localises to the virion. Self-assembles to form a T=3 icosahedral capsid composed of 180 copies of the capsid protein. The capsid encapsulates the single-stranded RNA genome. In Theobroma cacao (Cacao), this protein is Capsid protein.